Here is an 83-residue protein sequence, read N- to C-terminus: Bowman-Birk type proteinase inhibitor (83 aa).

7 disulfides stabilise this stretch: Cys18-Cys72, Cys19-Cys34, Cys22-Cys68, Cys24-Cys32, Cys42-Cys49, Cys46-Cys61, and Cys51-Cys59.

This sequence belongs to the Bowman-Birk serine protease inhibitor family.

In Phaseolus lunatus (Lima bean), this protein is Bowman-Birk type proteinase inhibitor.